The sequence spans 474 residues: 3-isopropylmalate dehydratase large subunit (474 aa).

[4Fe-4S] cluster contacts are provided by cysteine 353, cysteine 414, and cysteine 417.

The protein belongs to the aconitase/IPM isomerase family. LeuC type 1 subfamily. Heterodimer of LeuC and LeuD. [4Fe-4S] cluster serves as cofactor.

It catalyses the reaction (2R,3S)-3-isopropylmalate = (2S)-2-isopropylmalate. The protein operates within amino-acid biosynthesis; L-leucine biosynthesis; L-leucine from 3-methyl-2-oxobutanoate: step 2/4. Functionally, catalyzes the isomerization between 2-isopropylmalate and 3-isopropylmalate, via the formation of 2-isopropylmaleate. The polypeptide is 3-isopropylmalate dehydratase large subunit (Pseudomonas aeruginosa (strain LESB58)).